The following is a 319-amino-acid chain: ATP-dependent 6-phosphofructokinase (319 aa).

Residue glycine 11 participates in ATP binding. 21 to 25 (RAAVR) contributes to the ADP binding site. ATP contacts are provided by residues 72–73 (RS) and 102–105 (GDGS). Residue aspartate 103 participates in Mg(2+) binding. 125–127 (TID) contributes to the substrate binding site. Aspartate 127 serves as the catalytic Proton acceptor. Arginine 154 provides a ligand contact to ADP. Residues arginine 162 and 169-171 (MGR) each bind substrate. ADP is bound by residues 185 to 187 (GAE), arginine 211, and 213 to 215 (KKH). Residues glutamate 222, arginine 243, and 249 to 252 (HIQR) contribute to the substrate site.

It belongs to the phosphofructokinase type A (PFKA) family. ATP-dependent PFK group I subfamily. Prokaryotic clade 'B1' sub-subfamily. As to quaternary structure, homotetramer. It depends on Mg(2+) as a cofactor.

It is found in the cytoplasm. It catalyses the reaction beta-D-fructose 6-phosphate + ATP = beta-D-fructose 1,6-bisphosphate + ADP + H(+). It participates in carbohydrate degradation; glycolysis; D-glyceraldehyde 3-phosphate and glycerone phosphate from D-glucose: step 3/4. Its activity is regulated as follows. Allosterically activated by ADP and other diphosphonucleosides, and allosterically inhibited by phosphoenolpyruvate. Its function is as follows. Catalyzes the phosphorylation of D-fructose 6-phosphate to fructose 1,6-bisphosphate by ATP, the first committing step of glycolysis. This Brevibacillus brevis (strain 47 / JCM 6285 / NBRC 100599) protein is ATP-dependent 6-phosphofructokinase.